Reading from the N-terminus, the 241-residue chain is Folate receptor alpha (241 aa).

The first 19 residues, 1–19 (MAWQMTQLLLLALVAAAWG), serve as a signal peptide directing secretion. 8 disulfide bridges follow: cysteine 36/cysteine 64, cysteine 56/cysteine 104, cysteine 65/cysteine 108, cysteine 88/cysteine 174, cysteine 95/cysteine 145, cysteine 134/cysteine 208, cysteine 138/cysteine 188, and cysteine 151/cysteine 168. Asparagine 68 is a glycosylation site (N-linked (GlcNAc...) asparagine). Folate-binding positions include aspartate 102, tyrosine 106, 123–127 (WRKER), 156–161 (HKGWNW), and serine 195. N-linked (GlcNAc...) asparagine glycosylation occurs at asparagine 160. Residue serine 234 is the site of GPI-anchor amidated serine attachment. Positions 235-241 (GSTPQGI) are cleaved as a propeptide — removed in mature form.

It belongs to the folate receptor family. In terms of processing, the secreted form is derived from the membrane-bound form either by cleavage of the GPI anchor, or/and by proteolysis catalyzed by a metalloprotease. As to expression, detected in milk (at protein level).

The protein localises to the cell membrane. The protein resides in the apical cell membrane. It localises to the basolateral cell membrane. Its subcellular location is the secreted. It is found in the cytoplasmic vesicle. The protein localises to the clathrin-coated vesicle. The protein resides in the endosome. Functionally, binds to folate and reduced folic acid derivatives and mediates delivery of 5-methyltetrahydrofolate and folate analogs into the interior of cells. Has high affinity for folate and folic acid analogs at neutral pH. Exposure to slightly acidic pH after receptor endocytosis triggers a conformation change that strongly reduces its affinity for folates and mediates their release. Required for normal embryonic development and normal cell proliferation. The protein is Folate receptor alpha (FOLR1) of Bos taurus (Bovine).